Consider the following 248-residue polypeptide: Small ribosomal subunit protein uS3 (248 aa).

The KH type-2 domain maps to 38–106; sequence IREFLSEGLE…QVQLNILEVK (69 aa). A compositionally biased stretch (basic and acidic residues) spans 214–229; the sequence is SLMNARDERPSRGGRR. Positions 214 to 248 are disordered; sequence SLMNARDERPSRGGRRERPRRGGARRQRAEKKQEG. Basic residues predominate over residues 230-242; that stretch reads ERPRRGGARRQRA.

This sequence belongs to the universal ribosomal protein uS3 family. Part of the 30S ribosomal subunit. Forms a tight complex with proteins S10 and S14.

In terms of biological role, binds the lower part of the 30S subunit head. Binds mRNA in the 70S ribosome, positioning it for translation. The protein is Small ribosomal subunit protein uS3 of Corynebacterium urealyticum (strain ATCC 43042 / DSM 7109).